The following is a 210-amino-acid chain: Urease accessory protein UreF (210 aa).

This sequence belongs to the UreF family. As to quaternary structure, ureD, UreF and UreG form a complex that acts as a GTP-hydrolysis-dependent molecular chaperone, activating the urease apoprotein by helping to assemble the nickel containing metallocenter of UreC. The UreE protein probably delivers the nickel.

Its subcellular location is the cytoplasm. Its function is as follows. Required for maturation of urease via the functional incorporation of the urease nickel metallocenter. This is Urease accessory protein UreF from Cereibacter sphaeroides (strain ATCC 17025 / ATH 2.4.3) (Rhodobacter sphaeroides).